The primary structure comprises 123 residues: Defensin beta 118 (123 aa).

The N-terminal stretch at 1 to 19 is a signal peptide; sequence MKLLLLALPVLVLLPQVIP. Disulfide bonds link Cys27–Cys54, Cys34–Cys48, and Cys38–Cys55. The propeptide occupies 65-123; that stretch reads VPMTSPTPLSDSTPGIIDDILTVRFTTDYFEVSSKKDMVEESEAGRGTETSLPNVHHSS. Basic and acidic residues predominate over residues 100-110; that stretch reads KDMVEESEAGR. A disordered region spans residues 100–123; the sequence is KDMVEESEAGRGTETSLPNVHHSS. Residues 112-123 show a composition bias toward polar residues; sequence TETSLPNVHHSS.

It belongs to the beta-defensin family. The three-dimensional structure formed by the three intramolecular disulfide bridges is indispensable for antimicrobial activity.

Its subcellular location is the secreted. In terms of biological role, host defense peptide that exhibits antimicrobial activity against both Gram-negative bacteria, such as E.coli and S.typhimurium, and Gram-positive bacteria, such as S.aureus and B.subtilis. Inhibits cell adhesion of E.coli on intestinal epithelial enterocytes. Causes rapid permeabilization of both the outer and inner membrane of E.coli, leading to morphological alterations on the bacterial surface. Binds to bacterial lipopolysaccharides (LPS) with high affinity, and may thereby be involved in immunoregulation through LPS neutralization. May contribute to epididymal innate immunity and protect the sperm against attack by microorganisms. This chain is Defensin beta 118 (DEFB118), found in Pan troglodytes (Chimpanzee).